The sequence spans 106 residues: Molt-inhibiting hormone (106 aa).

An N-terminal signal peptide occupies residues Met-1 to Ala-29. Disulfide bonds link Cys-36–Cys-73, Cys-53–Cys-69, and Cys-56–Cys-82. An Alanine amide modification is found at Ala-104. Positions Gly-105 to Arg-106 are excised as a propeptide.

As to expression, sinus gland of the eyestalk.

The protein resides in the secreted. Inhibits Y-organs where molting hormone (ecdysteroid) is secreted. A molting cycle is initiated when MIH secretion diminishes or stops. This Faxonius limosus (Spinycheek crayfish) protein is Molt-inhibiting hormone.